Reading from the N-terminus, the 400-residue chain is WW domain-containing transcription regulator protein 1 (400 aa).

A Glycyl lysine isopeptide (Lys-Gly) (interchain with G-Cter in ubiquitin) cross-link involves residue Lys-46. Residues 52–117 (FFKEPDSGSH…QQHAHLRQQS (66 aa)) are disordered. Positions 61–70 (HSRQSSTDSS) are enriched in polar residues. Residue Ser-62 is modified to Phosphoserine. At Ser-89 the chain carries Phosphoserine; by LATS2. Ser-105 is subject to Phosphoserine. Positions 124 to 157 (LPLPPGWEMTFTATGQRYFLNHIEKITTWQDPRK) constitute a WW domain. The interval 222-400 (PNALTTQQQQ…NKSEPFLTWL (179 aa)) is required for interaction with PALS1. The stretch at 225-259 (LTTQQQQQQKLRLQRIQMERERIRMRQEELMRQEA) forms a coiled coil. At Ser-295 the chain carries Phosphoserine. Ser-311 carries the phosphoserine; by LATS2 modification. Residues 394 to 400 (EPFLTWL) carry the PDZ-binding motif.

Binds to SLC9A3R2 via the PDZ motif at the plasma membrane. Binds to YWHAZ in vivo and in vitro through the phosphoserine-binding motif RSHSSP. Interacts (via coiled-coil domain) with SMAD2 (via MH1 domain), SMAD3 and SMAD4. Interacts with MED15. Interacts with PAX8 and NKX2-1. Interacts with TEAD1, TEAD2, TEAD3 and TEAD4. Interacts (via WW domain) with PALS1. Interacts with LATS1. Interacts with YAP1 (when phosphorylated at 'Ser-127'). Interacts (via WW domain) with PRRG4 (via cytoplasmic domain). Interacts (via WW domain) with AMOTL2 (via PPXY motif); the interaction promotes WWTR1/TAZ localization to the cytoplasm and tight junctions, thereby inhibiting its transcriptional coactivator properties. Interacts (via WW domain) with AMOT isoform 1; the interaction facilitates translocation of WWTR1/TAZ to the cytoplasm. In terms of processing, phosphorylated by LATS2 and STK3/MST2. Phosphorylation by LATS2 results in creation of 14-3-3 binding sites, retention in the cytoplasm, and functional inactivation. Phosphorylation results in the inhibition of transcriptional coactivation through YWHAZ-mediated nuclear export. Phosphorylated in the nucleus by PRP4K; phosphorylation leads to nuclear exclusion. Ubiquitinated at Lys-46; leading to proteasomal degradation. Deubiquitinated and stabilized by UCHL1 at Lys-46; leading to inhibition of osteoclastogenesis. As to expression, highly expressed in kidney, heart, placenta and lung. Expressed in the thyroid tissue.

Its subcellular location is the nucleus. It localises to the cytoplasm. The protein localises to the cell membrane. The protein resides in the cell junction. It is found in the tight junction. Functionally, transcriptional coactivator which acts as a downstream regulatory target in the Hippo signaling pathway that plays a pivotal role in organ size control and tumor suppression by restricting proliferation and promoting apoptosis. The core of this pathway is composed of a kinase cascade wherein STK3/MST2 and STK4/MST1, in complex with its regulatory protein SAV1, phosphorylates and activates LATS1/2 in complex with its regulatory protein MOB1, which in turn phosphorylates and inactivates YAP1 oncoprotein and WWTR1/TAZ. WWTR1 enhances PAX8 and NKX2-1/TTF1-dependent gene activation. In conjunction with YAP1, involved in the regulation of TGFB1-dependent SMAD2 and SMAD3 nuclear accumulation. Plays a key role in coupling SMADs to the transcriptional machinery such as the mediator complex. Regulates embryonic stem-cell self-renewal, promotes cell proliferation and epithelial-mesenchymal transition. In Homo sapiens (Human), this protein is WW domain-containing transcription regulator protein 1.